The chain runs to 212 residues: Riboflavin kinase (212 aa).

Residues 1 to 83 are unknown; sequence MTELYCERKT…NLLRYFDIAS (83 aa). The tract at residues 84–212 is riboflavin kinase; sequence IKLVGRVVTG…GDRVELEVYL (129 aa). Residue 93–98 participates in CDP binding; sequence GLGEGA. The Mg(2+) site is built by Thr122 and Asn124. Residues Thr179 and Glu187 each coordinate FMN. 192-195 provides a ligand contact to CDP; the sequence is VRVR.

It belongs to the archaeal riboflavin kinase family. It depends on Mg(2+) as a cofactor.

It carries out the reaction riboflavin + CTP = CDP + FMN + H(+). It functions in the pathway cofactor biosynthesis; FMN biosynthesis; FMN from riboflavin (CTP route): step 1/1. In terms of biological role, catalyzes the CTP-dependent phosphorylation of riboflavin (vitamin B2) to form flavin mononucleotide (FMN). This Pyrobaculum calidifontis (strain DSM 21063 / JCM 11548 / VA1) protein is Riboflavin kinase (ribK).